A 431-amino-acid polypeptide reads, in one-letter code: MRWSEIGCTMKSVNIEWNVNLRQAFFCIARALDSVGVDDINHGHRVGYMAYSCAQAMEWSEEECQLVFALGLIHDCGVAQKRDFYRLLENMQPDNTQQHCVRGNELLSNCPPLAPFADAILYHHTPWDELKNIAISDRNKRFAALIFLADRVDYLKELYPRDEYGNVTQEARNQVCLEIGRLSGSLFERDLVRTMQHLLSKEFIWFSMEHHHIEAMGHNLPSTPFFEQKLGVEEIMSIAMLMANVVDAKSQFTFQHSQKVAELCQHLAKELGLNVEMQKALYLTGLVHDIGKLHTPEEILHKPGKLNESEYLCIQRHSTDSRYTLQMVFGQSVVCEWAGNHHERLDGSGYPRGLQGAAIDLPSRIIAIADVFQALTQARPYRGSMSLNEVMNIMRHEVSCGRLDSQVFDVIVRNSQQYYQLSIAESPTEWA.

The region spanning 39-155 (DINHGHRVGY…IFLADRVDYL (117 aa)) is the HD domain. The 197-residue stretch at 231–427 (GVEEIMSIAM…YYQLSIAESP (197 aa)) folds into the HD-GYP domain. The a divalent metal cation site is built by histidine 288 and aspartate 289. The Proton donor role is filled by lysine 292. Histidine 317, histidine 341, histidine 342, and aspartate 370 together coordinate a divalent metal cation.

Monomer. Requires Ca(2+) as cofactor. It depends on Mg(2+) as a cofactor.

It catalyses the reaction 3',3'-cGAMP + H2O = 5'-pApG-3' + H(+). The enzyme catalyses 5'-pApG-3' + H2O = 5'-ApG-3' + phosphate. In terms of biological role, phosphodiesterase (PDE) that catalyzes the hydrolysis of 3'3'-cyclic GMP-AMP (3'3'-cGAMP), leading to linear 5'-pApG. Also displays 5'-nucleotidase activity, further hydrolyzing 5'-pApG to 5'-ApG. Counteracts the function of the 3'3'-cGAMP synthase DncV, and is involved in the modulation of intracellular 3'3'-cGAMP levels. Enhances bacterial chemotaxis and inhibits intestinal colonization in vivo. Thus exerts a crucial role in regulating bacterial infectivity through catalyzing 3'3'-cGAMP degradation. Is specific for 3'3'-cGAMP since it cannot degrade other cGAMP linkage isomers (3'2'-, 2'3'-, and 2'2'-cGAMPs). Is also able to hydrolyze c-di-GMP but not c-di-AMP. The protein is 3'3'-cGAMP-specific phosphodiesterase 1 of Vibrio cholerae serotype O1 (strain ATCC 39315 / El Tor Inaba N16961).